The chain runs to 318 residues: Ribokinase (318 aa).

Substrate-binding positions include 12 to 14 (NWD), 40 to 44 (GKAAN), and Glu141. Residues Asn188 and 235–240 (TLGGNG) each bind ATP. K(+) contacts are provided by Asp264 and Ser266. 269-270 (GD) serves as a coordination point for ATP. Substrate is bound at residue Asp270. Residue Asp270 is the Proton acceptor of the active site. Residues Ser301, Arg304, Gly306, and Ser310 each coordinate K(+).

Belongs to the carbohydrate kinase PfkB family. Ribokinase subfamily. Homodimer. Mg(2+) is required as a cofactor.

It is found in the cytoplasm. Its subcellular location is the nucleus. The enzyme catalyses D-ribose + ATP = D-ribose 5-phosphate + ADP + H(+). Its pathway is carbohydrate metabolism; D-ribose degradation; D-ribose 5-phosphate from beta-D-ribopyranose: step 2/2. With respect to regulation, activated by a monovalent cation that binds near, but not in, the active site. The most likely occupant of the site in vivo is potassium. Ion binding induces a conformational change that may alter substrate affinity. In terms of biological role, catalyzes the phosphorylation of ribose at O-5 in a reaction requiring ATP and magnesium. The resulting D-ribose-5-phosphate can then be used either for sythesis of nucleotides, histidine, and tryptophan, or as a component of the pentose phosphate pathway. The chain is Ribokinase (rbsk) from Dictyostelium discoideum (Social amoeba).